The chain runs to 340 residues: Holliday junction branch migration complex subunit RuvB (340 aa).

The interval 1–182 (MSDIDPTVRA…FGIPTRLQFY (182 aa)) is large ATPase domain (RuvB-L). Residues leucine 21, arginine 22, glycine 63, lysine 66, threonine 67, threonine 68, 129 to 131 (EDF), arginine 172, tyrosine 182, and arginine 219 each bind ATP. Threonine 67 is a Mg(2+) binding site. Residues 183–253 (TEDELFIIVD…LADMALNRLG (71 aa)) are small ATPAse domain (RuvB-S). The segment at 256–340 (HLGLDGADRR…PRAQTDLFEG (85 aa)) is head domain (RuvB-H). The DNA site is built by arginine 292, arginine 311, and arginine 316.

It belongs to the RuvB family. As to quaternary structure, homohexamer. Forms an RuvA(8)-RuvB(12)-Holliday junction (HJ) complex. HJ DNA is sandwiched between 2 RuvA tetramers; dsDNA enters through RuvA and exits via RuvB. An RuvB hexamer assembles on each DNA strand where it exits the tetramer. Each RuvB hexamer is contacted by two RuvA subunits (via domain III) on 2 adjacent RuvB subunits; this complex drives branch migration. In the full resolvosome a probable DNA-RuvA(4)-RuvB(12)-RuvC(2) complex forms which resolves the HJ.

The protein localises to the cytoplasm. It carries out the reaction ATP + H2O = ADP + phosphate + H(+). Its function is as follows. The RuvA-RuvB-RuvC complex processes Holliday junction (HJ) DNA during genetic recombination and DNA repair, while the RuvA-RuvB complex plays an important role in the rescue of blocked DNA replication forks via replication fork reversal (RFR). RuvA specifically binds to HJ cruciform DNA, conferring on it an open structure. The RuvB hexamer acts as an ATP-dependent pump, pulling dsDNA into and through the RuvAB complex. RuvB forms 2 homohexamers on either side of HJ DNA bound by 1 or 2 RuvA tetramers; 4 subunits per hexamer contact DNA at a time. Coordinated motions by a converter formed by DNA-disengaged RuvB subunits stimulates ATP hydrolysis and nucleotide exchange. Immobilization of the converter enables RuvB to convert the ATP-contained energy into a lever motion, pulling 2 nucleotides of DNA out of the RuvA tetramer per ATP hydrolyzed, thus driving DNA branch migration. The RuvB motors rotate together with the DNA substrate, which together with the progressing nucleotide cycle form the mechanistic basis for DNA recombination by continuous HJ branch migration. Branch migration allows RuvC to scan DNA until it finds its consensus sequence, where it cleaves and resolves cruciform DNA. The protein is Holliday junction branch migration complex subunit RuvB of Roseobacter denitrificans (strain ATCC 33942 / OCh 114) (Erythrobacter sp. (strain OCh 114)).